Consider the following 86-residue polypeptide: Cytochrome c-555 (86 aa).

Positions 14, 17, 18, and 60 each coordinate heme c.

Post-translationally, binds 1 heme c group covalently per subunit.

Its function is as follows. This basic c-type monoheme cytochrome has been found exclusively in the green photosynthetic bacteria, although its role in bacterial photosynthesis is not established. It has an unusually low redox potential compared with mitochondrial cytochrome c. It is reactive with cytochrome c oxidases but not with reductases. This chain is Cytochrome c-555, found in Chlorobaculum thiosulfatiphilum (Chlorobium limicola f.sp. thiosulfatophilum).